The following is a 361-amino-acid chain: Phosphoserine aminotransferase (361 aa).

Position 42 (Arg42) interacts with L-glutamate. Residues Ala76–Arg77, Trp102, Thr153, Asp173, and Gln196 contribute to the pyridoxal 5'-phosphate site. Lys197 carries the N6-(pyridoxal phosphate)lysine modification. Asn238–Thr239 contacts pyridoxal 5'-phosphate.

The protein belongs to the class-V pyridoxal-phosphate-dependent aminotransferase family. SerC subfamily. In terms of assembly, homodimer. Requires pyridoxal 5'-phosphate as cofactor.

The protein resides in the cytoplasm. The enzyme catalyses O-phospho-L-serine + 2-oxoglutarate = 3-phosphooxypyruvate + L-glutamate. It carries out the reaction 4-(phosphooxy)-L-threonine + 2-oxoglutarate = (R)-3-hydroxy-2-oxo-4-phosphooxybutanoate + L-glutamate. It participates in amino-acid biosynthesis; L-serine biosynthesis; L-serine from 3-phospho-D-glycerate: step 2/3. It functions in the pathway cofactor biosynthesis; pyridoxine 5'-phosphate biosynthesis; pyridoxine 5'-phosphate from D-erythrose 4-phosphate: step 3/5. Functionally, catalyzes the reversible conversion of 3-phosphohydroxypyruvate to phosphoserine and of 3-hydroxy-2-oxo-4-phosphonooxybutanoate to phosphohydroxythreonine. The sequence is that of Phosphoserine aminotransferase from Buchnera aphidicola subsp. Acyrthosiphon pisum (strain 5A).